A 372-amino-acid polypeptide reads, in one-letter code: Alanine racemase (372 aa).

The Proton acceptor; specific for D-alanine role is filled by Lys-35. Position 35 is an N6-(pyridoxal phosphate)lysine (Lys-35). Arg-143 contacts substrate. Tyr-268 acts as the Proton acceptor; specific for L-alanine in catalysis. Position 316 (Met-316) interacts with substrate.

Belongs to the alanine racemase family. The cofactor is pyridoxal 5'-phosphate.

The enzyme catalyses L-alanine = D-alanine. The protein operates within amino-acid biosynthesis; D-alanine biosynthesis; D-alanine from L-alanine: step 1/1. Its function is as follows. Catalyzes the interconversion of L-alanine and D-alanine. May also act on other amino acids. The sequence is that of Alanine racemase (alr) from Shewanella frigidimarina (strain NCIMB 400).